Here is a 271-residue protein sequence, read N- to C-terminus: Putative phosphoenolpyruvate synthase regulatory protein (271 aa).

151–158 contributes to the ADP binding site; the sequence is GVSRSGKT.

It belongs to the pyruvate, phosphate/water dikinase regulatory protein family. PSRP subfamily.

It catalyses the reaction [pyruvate, water dikinase] + ADP = [pyruvate, water dikinase]-phosphate + AMP + H(+). The enzyme catalyses [pyruvate, water dikinase]-phosphate + phosphate + H(+) = [pyruvate, water dikinase] + diphosphate. Functionally, bifunctional serine/threonine kinase and phosphorylase involved in the regulation of the phosphoenolpyruvate synthase (PEPS) by catalyzing its phosphorylation/dephosphorylation. The protein is Putative phosphoenolpyruvate synthase regulatory protein of Burkholderia cenocepacia (strain ATCC BAA-245 / DSM 16553 / LMG 16656 / NCTC 13227 / J2315 / CF5610) (Burkholderia cepacia (strain J2315)).